A 1132-amino-acid chain; its full sequence is Cytospin-A (1132 aa).

A disordered region spans residues 1–166; sequence MKKAGRPVGN…SKSDGQLSDK (166 aa). Composition is skewed to low complexity over residues 73-109 and 119-129; these read STHSTSCGTNTNNPDTKTKTTSGPSGKRTTSMTSKES and SRNSSSKKQSS. Over residues 150-159 the composition is skewed to basic and acidic residues; it reads SESRMSKSKS. Residues 226–268 adopt a coiled-coil conformation; that stretch reads DVESTLLLLQEQNQAIRGELNLLKNENRMLKDRLNALGFSLEQ. The segment at 301–381 is disordered; that stretch reads ASSVEGSAPG…RKGSSGNTSE (81 aa). The segment covering 333-343 has biased composition (polar residues); sequence SEVYQAVTSSD. A compositionally biased stretch (low complexity) spans 348-377; sequence APSGCGSSSSSESEGGPPACRSSSRKGSSG. 2 coiled-coil regions span residues 385–440 and 478–798; these read ACLT…MDSL and RYME…RGRV. Disordered stretches follow at residues 869 to 895 and 939 to 1016; these read TSTTPTAPLPRTPLSPSPMKTPPAAAV and SRPA…RKDP. Over residues 875–889 the composition is skewed to pro residues; sequence APLPRTPLSPSPMKT. The span at 946–961 shows a compositional bias: polar residues; it reads QRVSNMDTSKTITVSR. Residues 962 to 972 are compositionally biased toward basic and acidic residues; it reads RSSEEPKRDIS. Residues 979-1000 are compositionally biased toward low complexity; that stretch reads ASSLISMSSAAALSSSSSPTAS. The Calponin-homology (CH) domain occupies 1026–1131; sequence GSKRNALLRW…YVTSIYKYFE (106 aa).

Belongs to the cytospin-A family. In terms of assembly, may interact with both microtubules and actin cytoskeleton.

It localises to the cytoplasm. Its subcellular location is the cytoskeleton. The protein resides in the spindle. The protein localises to the cell junction. It is found in the gap junction. In terms of biological role, involved in cytokinesis and spindle organization. May play a role in actin cytoskeleton organization and microtubule stabilization and hence required for proper cell adhesion and migration. The sequence is that of Cytospin-A (specc1la) from Danio rerio (Zebrafish).